We begin with the raw amino-acid sequence, 435 residues long: Citrate synthase (435 aa).

Residues H311 and D370 contribute to the active site.

The protein belongs to the citrate synthase family.

The enzyme catalyses oxaloacetate + acetyl-CoA + H2O = citrate + CoA + H(+). Its pathway is carbohydrate metabolism; tricarboxylic acid cycle; isocitrate from oxaloacetate: step 1/2. The chain is Citrate synthase (gltA) from Rickettsia bellii (strain RML369-C).